A 775-amino-acid chain; its full sequence is MPTTVSGPIKSVPGERRDRQVHTGASATTGMDIARSLRAEARRANERRLLVLAGDPDRTRERAATALDLADVPSAETTVVGPEPFLDCEHHDQSRAEELLGRTRTAVVFDAHEELRPDAVGRTVGAVDGGGLYVLLAPPLETWPEERDGFDASLAVPPFGVEDVSGHFRRRFVETLRAHRGIAIVDVDRGTVEQDGLTDPPPSRPVPSPTPPTDAWFRSETYAQCLTDDQRDAVQAFESLQTAGEAVVVEADRGRGKSSAAGLAAGNLAAADRDVLVTGPQYRSAAEVFVRAAHLLEAFGVDFTRDRSSDPQRLDVAGAGCVRYAPPDEAASLPDGPDVVIVDEAAALPVRRLEQFLDAPAVTFATTVHGYEGAGRGFSVRFRDRLAESDLAVTDVSMTTPIRYSDADPVEVWAFRALLLDARPPVDQLIEDATPETVEYRQLSAADLLADTHLLREVFGLLVLAHYRTEPSDLARLLDAPNLTVRALTHEGHVVAVALLAQEGGLSASTRATMYEGGRVRGNMLPDVLSTQLRDEAAGVPVGQRVLRIATHAAVRSRGLGSKLLSEIRAEFADHVDWVGVSYGATPELVRFWADNGYNTVHLATSRNATSGEYSVVMLDPCSDDAAALAARHREWFQDRIAAVLSDPLDDCDPDVVRAVLRATDGERPVSLSEWEWRLVAGVPGGASVLDTNPKPFRDLTRRHLSHPADATALSPREERLLVRKVLQAHPWSTVTEELAFVSERECMRTLGGIVERLTRLYGDPWVQEELDRHL.

Disordered regions lie at residues methionine 1–isoleucine 33 and threonine 191–alanine 215. Residues aspartate 199 to proline 212 are compositionally biased toward pro residues. Residues glutamine 230, glycine 254–leucine 263, and arginine 403 contribute to the ATP site. In terms of domain architecture, N-acetyltransferase spans valine 438 to serine 623. Acetyl-CoA contacts are provided by residues isoleucine 549–threonine 551, arginine 556–serine 562, and glutamate 588.

The protein belongs to the RNA cytidine acetyltransferase family. TmcA subfamily.

The protein resides in the cytoplasm. It catalyses the reaction cytidine(34) in elongator tRNA(Met) + acetyl-CoA + ATP + H2O = N(4)-acetylcytidine(34) in elongator tRNA(Met) + ADP + phosphate + CoA + H(+). Its function is as follows. Catalyzes the formation of N(4)-acetylcytidine (ac(4)C) at the wobble position of tRNA(Met), by using acetyl-CoA as an acetyl donor and ATP (or GTP). In Haloarcula marismortui (strain ATCC 43049 / DSM 3752 / JCM 8966 / VKM B-1809) (Halobacterium marismortui), this protein is tRNA(Met) cytidine acetyltransferase TmcA.